The primary structure comprises 350 residues: Probable dual-specificity RNA methyltransferase RlmN (350 aa).

E91 (proton acceptor) is an active-site residue. One can recognise a Radical SAM core domain in the interval 97–327; sequence YHHGNSVCIS…VTIRREMGRD (231 aa). C104 and C332 form a disulfide bridge. 3 residues coordinate [4Fe-4S] cluster: C111, C115, and C118. S-adenosyl-L-methionine is bound by residues 158–159, S190, 213–215, and N289; these read GE and SLH. The S-methylcysteine intermediate role is filled by C332.

Belongs to the radical SAM superfamily. RlmN family. The cofactor is [4Fe-4S] cluster.

The protein resides in the cytoplasm. It catalyses the reaction adenosine(2503) in 23S rRNA + 2 reduced [2Fe-2S]-[ferredoxin] + 2 S-adenosyl-L-methionine = 2-methyladenosine(2503) in 23S rRNA + 5'-deoxyadenosine + L-methionine + 2 oxidized [2Fe-2S]-[ferredoxin] + S-adenosyl-L-homocysteine. The catalysed reaction is adenosine(37) in tRNA + 2 reduced [2Fe-2S]-[ferredoxin] + 2 S-adenosyl-L-methionine = 2-methyladenosine(37) in tRNA + 5'-deoxyadenosine + L-methionine + 2 oxidized [2Fe-2S]-[ferredoxin] + S-adenosyl-L-homocysteine. Specifically methylates position 2 of adenine 2503 in 23S rRNA and position 2 of adenine 37 in tRNAs. The polypeptide is Probable dual-specificity RNA methyltransferase RlmN (Lachnospira eligens (strain ATCC 27750 / DSM 3376 / VPI C15-48 / C15-B4) (Eubacterium eligens)).